The primary structure comprises 387 residues: O-methyltransferase lepI (387 aa).

Substrate is bound at residue 135–148; sequence FENLWPVLMALPDF. A substrate binding region spans residues 175 to 195; that stretch reads CFHWLATQPTRIANFKVLLTD. Residues 227-228, aspartate 252, 275-276, and arginine 291 each bind S-adenosyl-L-methionine; these read GG and NF.

Belongs to the class I-like SAM-binding methyltransferase superfamily. Cation-independent O-methyltransferase family.

In terms of biological role, O-methyltransferase; part of the gene cluster 23 that mediates the biosynthesis of a family of 2-pyridones known as leporins. The hybrid PKS-NRPS synthetase lepA and the enoyl reductase lepG are responsible for fusion of phenylalanine with a hexaketide and subsequent release of the stable tetramic acid precursor, pre-leporin C. Because lepA lacks a designated enoylreductase (ER) domain, the required activity is provided the enoyl reductase lepG. It is possible that the dehydrogenase lepF also participates in production of pre-leporin C. Cytochrome P450 monooxygenase lepH is then required for the ring expansion step to yield leporin C. Leporin C is then presumably further oxidized by the N-hydroxylase lepD to form leporin B. LepI may possess a function in biosynthesis upstream of lepA. Leporin B is further oxidized in the presence of ferric ion to give the leporin B trimer-iron chelate, but whether or not this reaction is catalyzed by an enzyme in the pathway or by ferric ion is not determined yet. In Aspergillus flavus (strain ATCC 200026 / FGSC A1120 / IAM 13836 / NRRL 3357 / JCM 12722 / SRRC 167), this protein is O-methyltransferase lepI.